A 467-amino-acid chain; its full sequence is Probable lipase C1672.09 (467 aa).

Residues 1–17 (MIQLPFIQRLKWEEYMA) are Cytoplasmic-facing. A helical; Signal-anchor for type II membrane protein transmembrane segment spans residues 18-38 (LFLGFFFVIFEKLLSCLAFMI). Residues 39 to 467 (HNTLGLFYRS…NHIAPRNKPI (429 aa)) lie on the Lumenal side of the membrane. Residue S66 is modified to Phosphoserine. One can recognise an AB hydrolase-1 domain in the interval 127–421 (PVVYCHHGLL…SYEHLDMIWA (295 aa)). S222 serves as the catalytic Nucleophile. Residues N311 and N316 are each glycosylated (N-linked (GlcNAc...) asparagine). Residues D389 and H415 each act as charge relay system in the active site. The span at 440–457 (HHPPEHEENDKENREIQK) shows a compositional bias: basic and acidic residues. A disordered region spans residues 440 to 467 (HHPPEHEENDKENREIQKNHIAPRNKPI).

The protein belongs to the AB hydrolase superfamily. Lipase family.

The protein localises to the cytoplasm. It is found in the membrane. Functionally, probable lipase. In Schizosaccharomyces pombe (strain 972 / ATCC 24843) (Fission yeast), this protein is Probable lipase C1672.09.